A 199-amino-acid chain; its full sequence is Prolactin-2 (199 aa).

Intrachain disulfides connect C4-C11, C58-C174, and C191-C199.

Belongs to the somatotropin/prolactin family.

It is found in the secreted. This Alligator mississippiensis (American alligator) protein is Prolactin-2.